Here is a 275-residue protein sequence, read N- to C-terminus: NH(3)-dependent NAD(+) synthetase (275 aa).

An ATP-binding site is contributed by Gly-47 to Ser-54. Asp-53 lines the Mg(2+) pocket. Arg-141 is a binding site for deamido-NAD(+). Thr-161 serves as a coordination point for ATP. Glu-166 lines the Mg(2+) pocket. Lys-174 and Asp-181 together coordinate deamido-NAD(+). ATP-binding residues include Lys-190 and Thr-212. Residue His-261–Lys-262 coordinates deamido-NAD(+).

It belongs to the NAD synthetase family. In terms of assembly, homodimer.

It catalyses the reaction deamido-NAD(+) + NH4(+) + ATP = AMP + diphosphate + NAD(+) + H(+). Its pathway is cofactor biosynthesis; NAD(+) biosynthesis; NAD(+) from deamido-NAD(+) (ammonia route): step 1/1. In terms of biological role, catalyzes the ATP-dependent amidation of deamido-NAD to form NAD. Uses ammonia as a nitrogen source. In Oceanobacillus iheyensis (strain DSM 14371 / CIP 107618 / JCM 11309 / KCTC 3954 / HTE831), this protein is NH(3)-dependent NAD(+) synthetase.